We begin with the raw amino-acid sequence, 463 residues long: Phosphomannomutase/phosphoglucomutase (463 aa).

Position 17 (Tyr17) interacts with alpha-D-glucose 1-phosphate. Position 17 (Tyr17) interacts with alpha-D-mannose 1-phosphate. Residue Ser108 is the Non-phosphorylated intermediate of the active site. Residues Ser108, Asp242, Asp244, and Asp246 each contribute to the Mg(2+) site. Ser108 is subject to Phosphoserine. Residues Lys285, His308, 325–329 (EMSGH), and 421–425 (RASNT) each bind alpha-D-glucose 1-phosphate. Residues His308, 325–329 (EMSGH), and 421–425 (RASNT) each bind alpha-D-mannose 1-phosphate.

Belongs to the phosphohexose mutase family. As to quaternary structure, monomer. The cofactor is Mg(2+).

It carries out the reaction alpha-D-mannose 1-phosphate = D-mannose 6-phosphate. It catalyses the reaction alpha-D-glucose 1-phosphate = alpha-D-glucose 6-phosphate. The protein operates within nucleotide-sugar biosynthesis; GDP-alpha-D-mannose biosynthesis; alpha-D-mannose 1-phosphate from D-fructose 6-phosphate: step 2/2. It functions in the pathway bacterial outer membrane biogenesis; lipopolysaccharide biosynthesis. Highly reversible phosphoryltransferase. The phosphomannomutase activity produces a precursor for alginate polymerization, the alginate layer causes a mucoid phenotype and provides a protective barrier against host immune defenses and antibiotics. Also involved in core lipopolysaccaride (LPS) biosynthesis due to its phosphoglucomutase activity. Essential for rhamnolipid production, an exoproduct correlated with pathogenicity. Required for biofilm production. The reaction proceeds via 2 processive phosphoryl transferase reactions; first from enzyme-phospho-Ser-108 to the substrate (generating a bisphosphorylated substrate intermediate and a dephosphorylated enzyme), a 180 degree rotation of the intermediate (probably aided by movement of domain 4), and subsequent transfer of phosphate back to the enzyme. In Pseudomonas aeruginosa (strain UCBPP-PA14), this protein is Phosphomannomutase/phosphoglucomutase (algC).